The primary structure comprises 451 residues: MEEKPAGRRVVLVAVPAQGHISPIMQLAKTLHLKGFSITIAQTKFNYFSPSDDFTDFQFVTIPESLPESDFEDLGPIEFLHKLNKECQVSFKDCLGQLLLQQGNEIACVVYDEFMYFAEAAAKEFKLPNVIFSTTSATAFVCRSAFDKLYANSILTPLKEPKGQQNELVPEFHPLRCKDFPVSHWASLESMMELYRNTVDKRTASSVIINTASCLESSSLSRLQQQLQIPVYPIGPLHLVASASTSLLEENKSCIEWLNKQKKNSVIFVSLGSLALMEINEVIETALGLDSSKQQFLWVIRPGSVRGSEWIENLPKEFSKIISGRGYIVKWAPQKEVLSHPAVGGFWSHCGWNSTLESIGEGVPMICKPFSSDQMVNARYLECVWKIGIQVEGDLDRGAVERAVRRLMVEEEGEGMRKRAISLKEQLRASVISGGSSHNSLEEFVHYMRTL.

Residues Ser-273, 332–334 (APQ), 349–357 (HCGWNSTLE), and 371–374 (SSDQ) contribute to the UDP-alpha-D-glucose site.

It belongs to the UDP-glycosyltransferase family.

Its function is as follows. Possesses low quercetin 3-O-glucosyltransferase and 7-O-glucosyltransferase activities in vitro. The protein is UDP-glycosyltransferase 76E11 (UGT76E11) of Arabidopsis thaliana (Mouse-ear cress).